The sequence spans 454 residues: PGPTLYADWGDMIQVTLKNSMPDNGTGIHWHGLRQYHTCTEDGVPGITECPLAPGDTKTYTFQATQFGTSWYHSHYSSQYGEGMLGGIVINGPATSNYDVDLGVYTISDWYYTPVFALGERIAHSQAGPPSGDNGLINGSMVAPAGQTGGKYTTNTITAGKKYRLRLINTSVDNHFMVSLDNHAFTVITSDFVPIVPYTANWIFIGIGQRYDVIITANQTVGSYWFRAEVQNGCGTNNNNGNIKSIFTYSGAASTTPSSSATPYTGRCTDETGIIPFWDSFVPSGPLSGNVEQLNVAINIGVDASGPIVTWGINLSAIDVDWKKPILQYVLDGNNSWPASENLIELPNAAQWYYWVIQEVPGNVNGNPVSINVPHPMHLHGHDFFLLGTGVGTYNNTINGPSLDYDNPTRRDVAMLPAGGWMVLAFQTDNPGAWLMHCHIAWHVSEGLAVQFQG.

2 Plastocyanin-like domains span residues 1 to 95 (PGPT…GPAT) and 101 to 252 (DLGV…YSGA). Asn24 carries N-linked (GlcNAc...) asparagine glycosylation. Cu cation-binding residues include His29, His31, His73, and His75. N-linked (GlcNAc...) asparagine glycans are attached at residues Asn138, Asn169, Asn218, Asn314, and Asn334. One can recognise a Plastocyanin-like 3 domain in the interval 319-454 (DVDWKKPILQ…SEGLAVQFQG (136 aa)). Positions 375, 378, and 380 each coordinate Cu cation. Asn395 is a glycosylation site (N-linked (GlcNAc...) asparagine). Residues His437, Cys438, His439, and His443 each contribute to the Cu cation site.

The protein belongs to the multicopper oxidase family. The cofactor is Cu cation.

The protein resides in the secreted. It catalyses the reaction 4 hydroquinone + O2 = 4 benzosemiquinone + 2 H2O. Functionally, lignin degradation and detoxification of lignin-derived products. The sequence is that of Laccase-3 (lcc3) from Botryotinia fuckeliana (Noble rot fungus).